Reading from the N-terminus, the 102-residue chain is NADH-quinone oxidoreductase subunit K (102 aa).

3 helical membrane passes run 5–25 (IAHY…GIFL), 31–51 (IIIL…FIAF), and 66–86 (FVLT…VVFF).

The protein belongs to the complex I subunit 4L family. As to quaternary structure, NDH-1 is composed of 14 different subunits. Subunits NuoA, H, J, K, L, M, N constitute the membrane sector of the complex.

Its subcellular location is the cell inner membrane. It catalyses the reaction a quinone + NADH + 5 H(+)(in) = a quinol + NAD(+) + 4 H(+)(out). In terms of biological role, NDH-1 shuttles electrons from NADH, via FMN and iron-sulfur (Fe-S) centers, to quinones in the respiratory chain. The immediate electron acceptor for the enzyme in this species is believed to be ubiquinone. Couples the redox reaction to proton translocation (for every two electrons transferred, four hydrogen ions are translocated across the cytoplasmic membrane), and thus conserves the redox energy in a proton gradient. This Chelativorans sp. (strain BNC1) protein is NADH-quinone oxidoreductase subunit K.